We begin with the raw amino-acid sequence, 327 residues long: Tyrosine--tRNA ligase (327 aa).

Tyrosine 33 contributes to the L-tyrosine binding site. The 'HIGH' region motif lies at 38–46; the sequence is PSGVLHLGH. Positions 154, 158, 161, and 176 each coordinate L-tyrosine. The 'KMSKS' region motif lies at 212–216; that stretch reads KMSSS. Residue serine 215 participates in ATP binding.

Belongs to the class-I aminoacyl-tRNA synthetase family. TyrS type 3 subfamily. Homodimer.

It is found in the cytoplasm. The enzyme catalyses tRNA(Tyr) + L-tyrosine + ATP = L-tyrosyl-tRNA(Tyr) + AMP + diphosphate + H(+). In terms of biological role, catalyzes the attachment of tyrosine to tRNA(Tyr) in a two-step reaction: tyrosine is first activated by ATP to form Tyr-AMP and then transferred to the acceptor end of tRNA(Tyr). This is Tyrosine--tRNA ligase from Halobacterium salinarum (strain ATCC 29341 / DSM 671 / R1).